Here is a 640-residue protein sequence, read N- to C-terminus: Probable potassium transport system protein Kup 2 (640 aa).

Residues 1 to 20 (MTADIAATPAETPATNGHGD) form a disordered region. A run of 12 helical transmembrane segments spans residues 30 to 50 (LTLG…LYAL), 71 to 91 (VVSL…VVIL), 117 to 137 (ASII…DAVI), 155 to 175 (AAFD…LFAV), 183 to 203 (VAAF…IAAF), 224 to 244 (FMLH…LAVT), 265 to 285 (WLFV…ALVI), 294 to 314 (PFFL…ATVA), 363 to 383 (LLLV…ALAS), 385 to 405 (YGIS…VVIW), 410 to 430 (WSPI…LTFL), and 437 to 457 (VLEG…LMYT).

It belongs to the HAK/KUP transporter (TC 2.A.72) family.

It localises to the cell inner membrane. It carries out the reaction K(+)(in) + H(+)(in) = K(+)(out) + H(+)(out). Functionally, transport of potassium into the cell. Likely operates as a K(+):H(+) symporter. This Bradyrhizobium sp. (strain ORS 278) protein is Probable potassium transport system protein Kup 2.